The primary structure comprises 279 residues: Phosphate import ATP-binding protein PstB 1 (279 aa).

The ABC transporter domain maps to 26 to 274 (VMDCKLDKIF…PREQLTSDYI (249 aa)). Residue 59-66 (GPSGCGKS) participates in ATP binding.

Belongs to the ABC transporter superfamily. Phosphate importer (TC 3.A.1.7) family. In terms of assembly, the complex is composed of two ATP-binding proteins (PstB), two transmembrane proteins (PstC and PstA) and a solute-binding protein (PstS).

It is found in the cell inner membrane. The enzyme catalyses phosphate(out) + ATP + H2O = ADP + 2 phosphate(in) + H(+). Functionally, part of the ABC transporter complex PstSACB involved in phosphate import. Responsible for energy coupling to the transport system. The protein is Phosphate import ATP-binding protein PstB 1 of Pseudomonas putida (strain ATCC 47054 / DSM 6125 / CFBP 8728 / NCIMB 11950 / KT2440).